Reading from the N-terminus, the 301-residue chain is GGSCGQCRVKIKSGGGDILPTEMGHITKKEAKEGCRLACQVAVKTDMELELDEEIFGVKKWQCEVISNDNKATFIKELLLKLPEGEDVHFKAGGYIQIEAPAHVVKYADFDIPEKYRGDWDKYGLFDIVSTVNEDVLRAYSMANYPDEKGRIMLNVRIATPPSANVPAGKMSSYIFNLKAGDKVTISGPFGEFFVKETDAEMVFIGGGAGMAPMRSHIFDQLKSKKTKRKMSFWYGARSTREVFYQADFDALAAENDNFVWHVALSEPLPEDNWTGYTGFIHNVIYENYLKNHKAPEDCEY.

In terms of domain architecture, 2Fe-2S ferredoxin-type spans 1–45 (GGSCGQCRVKIKSGGGDILPTEMGHITKKEAKEGCRLACQVAVKT). The [2Fe-2S] cluster site is built by Cys-4, Cys-7, and Cys-39. The region spanning 58-196 (VKKWQCEVIS…SGPFGEFFVK (139 aa)) is the FAD-binding FR-type domain. Residues 199–301 (DAEMVFIGGG…NHKAPEDCEY (103 aa)) are catalytic.

The protein belongs to the NqrF family. Composed of six subunits; NqrA, NqrB, NqrC, NqrD, NqrE and NqrF. Requires [2Fe-2S] cluster as cofactor. FAD serves as cofactor.

It is found in the cell inner membrane. The catalysed reaction is a ubiquinone + n Na(+)(in) + NADH + H(+) = a ubiquinol + n Na(+)(out) + NAD(+). In terms of biological role, NQR complex catalyzes the reduction of ubiquinone-1 to ubiquinol by two successive reactions, coupled with the transport of Na(+) ions from the cytoplasm to the periplasm. The first step is catalyzed by NqrF, which accepts electrons from NADH and reduces ubiquinone-1 to ubisemiquinone by a one-electron transfer pathway. This is Na(+)-translocating NADH-quinone reductase subunit F (nqrF) from Shewanella putrefaciens (Pseudomonas putrefaciens).